Here is a 250-residue protein sequence, read N- to C-terminus: Probable dihydroorotate dehydrogenase B (NAD(+)), electron transfer subunit (250 aa).

Residues 1–89 form the FAD-binding FR-type domain; the sequence is MINLKIEENV…RGPYGNGFDV (89 aa). [2Fe-2S] cluster is bound by residues Cys200, Cys205, Cys208, and Cys216.

This sequence belongs to the PyrK family. As to quaternary structure, heterotetramer of 2 PyrK and 2 PyrD type B subunits. [2Fe-2S] cluster is required as a cofactor. The cofactor is FAD.

Its pathway is pyrimidine metabolism; UMP biosynthesis via de novo pathway; orotate from (S)-dihydroorotate (NAD(+) route): step 1/1. Its function is as follows. Responsible for channeling the electrons from the oxidation of dihydroorotate from the FMN redox center in the PyrD type B subunit to the ultimate electron acceptor NAD(+). The protein is Probable dihydroorotate dehydrogenase B (NAD(+)), electron transfer subunit of Thermoplasma volcanium (strain ATCC 51530 / DSM 4299 / JCM 9571 / NBRC 15438 / GSS1).